The following is a 178-amino-acid chain: Ribosome maturation factor RimM (178 aa).

A PRC barrel domain is found at 104–177; sequence SDEYYFYEVI…KIVVKLPEWL (74 aa).

This sequence belongs to the RimM family. In terms of assembly, binds ribosomal protein uS19.

The protein localises to the cytoplasm. In terms of biological role, an accessory protein needed during the final step in the assembly of 30S ribosomal subunit, possibly for assembly of the head region. Essential for efficient processing of 16S rRNA. May be needed both before and after RbfA during the maturation of 16S rRNA. It has affinity for free ribosomal 30S subunits but not for 70S ribosomes. This chain is Ribosome maturation factor RimM, found in Thermosipho melanesiensis (strain DSM 12029 / CIP 104789 / BI429).